Here is a 219-residue protein sequence, read N- to C-terminus: Probable GTP-binding protein EngB (219 aa).

The region spanning 31–205 (VGVEIAFAGR…LSILNEWCHP (175 aa)) is the EngB-type G domain. Residues 39 to 46 (GRSNAGKS), 66 to 70 (GRTQL), 84 to 87 (DLPG), 151 to 154 (TKSD), and 184 to 186 (FSS) each bind GTP. Ser-46 and Thr-68 together coordinate Mg(2+).

This sequence belongs to the TRAFAC class TrmE-Era-EngA-EngB-Septin-like GTPase superfamily. EngB GTPase family. The cofactor is Mg(2+).

Its function is as follows. Necessary for normal cell division and for the maintenance of normal septation. This Shewanella denitrificans (strain OS217 / ATCC BAA-1090 / DSM 15013) protein is Probable GTP-binding protein EngB.